Here is a 323-residue protein sequence, read N- to C-terminus: MNIENNEHSFRPHPELGEHISFTKEQPIDIHDSLASLIETVAPLEIDLVLEGETGTGKDTLARKIHRLSGCSGRLIAVNCAAIPETLAESELFGVNNGAYTGAVQARAGYIEEANNGILFLDEIDSMPLSLQAKLLRVLENRGIERLGGTRFIPVNMRVIVATQKPLLTLVEQGTFRRDLYFRLNTLSIQLQPLRSQVEIIIPLFRHFIAKAATTMQCTPPEITQELCEYLLSYSWPGNIRELKTAAKRFTLGLPPLNVPRNAERQGPQLKEILRRIEKSLIHDCLVRHGHSIDEAAMELGMPLRTLYHRIKLLNVTTQRIIV.

Residues 41-251 (VAPLEIDLVL…ELKTAAKRFT (211 aa)) form the Sigma-54 factor interaction domain. ATP contacts are provided by residues 52-59 (GETGTGKD) and 123-132 (EIDSMPLSLQ). A DNA-binding region (H-T-H motif) is located at residues 293–312 (IDEAAMELGMPLRTLYHRIK).

Functionally, positive activator of wtsB involved in plant pathogenicity. Probably interacts with sigma-54. The polypeptide is Pathogenicity locus probable regulatory protein WtsA (wtsA) (Pantoea stewartii subsp. stewartii (Erwinia stewartii)).